We begin with the raw amino-acid sequence, 189 residues long: FUN14 domain-containing protein 2 (189 aa).

Residues Met1–Lys80 lie on the Cytoplasmic side of the membrane. Phosphoserine is present on residues Ser10 and Ser53. A helical transmembrane segment spans residues Tyr81 to Phe101. The Mitochondrial intermembrane segment spans residues Gln102–Leu107. Residues Ala108–Ile128 form a helical membrane-spanning segment. Topologically, residues Lys129–Glu164 are cytoplasmic. Ser151 is subject to Phosphoserine. Residues Val165–Leu185 form a helical membrane-spanning segment. Residues Gly186–Ser189 lie on the Mitochondrial intermembrane side of the membrane.

Belongs to the FUN14 family. As to expression, highly expressed in platelets (at protein level).

It localises to the mitochondrion outer membrane. It is found in the nucleus. Binds directly and specifically 1,2-Diacyl-sn-glycero-3-phospho-(1'-myo-inositol-3',4',5'-bisphosphate) (PIP3) leading to the recruitment of PIP3 to mitochondria and may play a role in the regulation of the platelet activation via AKT/GSK3B/cGMP signaling pathways. May act as transcription factor that regulates SREBP1 (isoform SREBP-1C) expression in order to modulate triglyceride (TG) homeostasis in hepatocytes. This Homo sapiens (Human) protein is FUN14 domain-containing protein 2.